The primary structure comprises 335 residues: Adenosine deaminase (335 aa).

Zn(2+)-binding residues include H12 and H14. 2 residues coordinate substrate: H14 and D16. Residue H197 participates in Zn(2+) binding. E200 (proton donor) is an active-site residue. Position 278 (D278) interacts with Zn(2+).

Belongs to the metallo-dependent hydrolases superfamily. Adenosine and AMP deaminases family. Adenosine deaminase subfamily. The cofactor is Zn(2+).

It catalyses the reaction adenosine + H2O + H(+) = inosine + NH4(+). The catalysed reaction is 2'-deoxyadenosine + H2O + H(+) = 2'-deoxyinosine + NH4(+). Its function is as follows. Catalyzes the hydrolytic deamination of adenosine and 2-deoxyadenosine. This Clostridium botulinum (strain Okra / Type B1) protein is Adenosine deaminase.